Consider the following 2843-residue polypeptide: Adenomatous polyposis coli protein (2843 aa).

A2 carries the post-translational modification N-acetylalanine. The stretch at 2-61 (AAASYDQLLKQVEALKMENSNLRQELEDNSNHLTKLETEASNMKEVLKQLQGSIEDEAMA) forms a coiled coil. Phosphoserine occurs at positions 107 and 111. Residues 127–248 (SRESTGYLEE…ATEAERSSQN (122 aa)) adopt a coiled-coil conformation. A disordered region spans residues 239–305 (ATEAERSSQN…STHSAPRRLT (67 aa)). Over residues 241–261 (EAERSSQNKHETGSHDAERQN) the composition is skewed to basic and acidic residues. A compositionally biased stretch (polar residues) spans 271-282 (MATSGNGQGSTT). Over residues 290–299 (SVLSSSSTHS) the composition is skewed to low complexity. ARM repeat units follow at residues 453 to 495 (LMKL…HYSI), 505 to 547 (LTNL…IASV), 548 to 591 (LRNL…VLSA), 592 to 638 (LWNL…GGGI), 639 to 683 (LRNV…ACGT), 684 to 725 (LWNL…SAAA), and 726 to 767 (LRNL…LDAQ). Residues S744, S748, and S780 each carry the phosphoserine modification. The interval 828 to 878 (TTVLPSSSSSRGSLDSSRSEKDRSLERERGIGLGNYHPATENPGTSSKRGL) is disordered. Residues 833 to 843 (SSSSSRGSLDS) are compositionally biased toward low complexity. Residues 844 to 857 (SRSEKDRSLERERG) show a composition bias toward basic and acidic residues. Over residues 869–878 (NPGTSSKRGL) the composition is skewed to polar residues. S908 bears the Phosphoserine mark. Disordered regions lie at residues 923 to 943 (RRSSAAHTHSNTYNFTKSENS) and 958 to 987 (RSSNDSLNSVSSSDGYGKRGQMKPSIESYS). The segment covering 927–943 (AAHTHSNTYNFTKSENS) has biased composition (polar residues). The tract at residues 960–1337 (SNDSLNSVSS…QHPRTKSSRL (378 aa)) is responsible for down-regulation through a process mediated by direct ubiquitination. A compositionally biased stretch (low complexity) spans 961–971 (NDSLNSVSSSD). Phosphoserine occurs at positions 987, 1038, and 1042. The tract at residues 1020 to 1169 (ELDTPINYSL…TNYSIKYNEE (150 aa)) is interaction with catenins. Disordered stretches follow at residues 1099–1169 (VSPY…YNEE), 1190–1244 (SQKQ…GQPQ), and 1311–1376 (IGTR…PEHY). A compositionally biased stretch (polar residues) spans 1107–1130 (ANGSETNRVGSNHGINQNVSQSLC). The span at 1146 to 1159 (RYSEEEQHEEEERP) shows a compositional bias: basic and acidic residues. Residues 1190-1224 (SQKQSFSFSKSSSGQSSKTEHMSSSSENTSTPSSN) are compositionally biased toward low complexity. The span at 1225 to 1244 (AKRQNQLHPSSAQSRSGQPQ) shows a compositional bias: polar residues. Low complexity-rich tracts occupy residues 1335–1345 (SRLQGSSLSSE) and 1355–1366 (SSGAKSPSKSGA). Phosphoserine is present on residues S1360, S1371, S1385, S1392, and S1395. Disordered stretches follow at residues 1403–1475 (SSVQ…VNAA), 1526–1569 (PPVQ…DSDD), 1583–1611 (MPTKSSRKAKKPAQTASKLPPPVARKPSQ), 1664–1717 (SPPN…DDNK), and 1729–1836 (NSAM…RVRG). A Phosphothreonine modification is found at T1438. Composition is skewed to basic and acidic residues over residues 1448–1466 (TKREVPKNKAPTAEKRESG) and 1540–1564 (EQPKESNENQEKEAEKTIDSEKDLL). The residue at position 1567 (S1567) is a Phosphoserine. The span at 1683–1698 (EFEKRDTIPTEGRSTD) shows a compositional bias: basic and acidic residues. The span at 1735–1744 (GKSHKPFRVK) shows a compositional bias: basic residues. The residue at position 1774 (S1774) is a Phosphoserine. 2 stretches are compositionally biased toward basic and acidic residues: residues 1785-1794 (YRTRVRKNAD) and 1804-1813 (VFSDNKDSKK). Phosphoserine is present on residues S1861, S1863, and S1864. Residues 1866–1893 (DFDDDDVDLSREKAELRKAKENKESEAK) form a highly charged region. Positions 1881–1896 (LRKAKENKESEAKVTS) are enriched in basic and acidic residues. Disordered stretches follow at residues 1881-1950 (LRKA…TDEK), 1965-2011 (HNSS…APKS), and 2043-2072 (ISSAMPKKKKPSRLKGDNEKHSPRNMGGIL). Composition is skewed to polar residues over residues 1897 to 1913 (HTELTSNQQSANKTQAI) and 1928 to 1938 (QKQSTFPQSSK). Residues 1939–1950 (DIPDRGAATDEK) show a composition bias toward basic and acidic residues. Phosphoserine is present on residues S1971 and S1973. Over residues 1979-1991 (NNNKENEPIKETE) the composition is skewed to basic and acidic residues. The segment at 2035–2059 (EDDLLQECISSAMPKKKKPSRLKGD) is interaction with AXIN1. S2088, S2093, S2125, S2129, S2130, and S2132 each carry phosphoserine. Disordered regions lie at residues 2147–2635 (PFHL…SGAT) and 2667–2714 (NNPR…VPMR). A Phosphothreonine modification is found at T2151. Residues 2167 to 2674 (ILKPGEKSTL…PINNPRSGRS (508 aa)) form a basic region region. A compositionally biased stretch (basic and acidic residues) spans 2169 to 2187 (KPGEKSTLETKKIESESKG). Polar residues-rich tracts occupy residues 2203-2223 (VRSNSEISGQMKQPLQANMPS) and 2257-2271 (ASKSPSEGQTATTSP). 3 positions are modified to phosphoserine: S2260, S2270, and S2283. The segment covering 2286–2331 (ARQTSQIGGSSKAPSRSGSRDSTPSRPAQQPLSRPIQSPGRNSISP) has biased composition (polar residues). Residues 2348 to 2369 (TSSPSTASTKSSGSGKMSYTSP) show a composition bias toward low complexity. 2 stretches are compositionally biased toward polar residues: residues 2370–2409 (GRQMSQQNLTKQTGLSKNASSIPRSESASKGLNQMNNGNG) and 2418–2427 (RMSSTKSSGS). Over residues 2459–2477 (SASFESLSPSSRPASPTRS) the composition is skewed to low complexity. 2 positions are modified to phosphoserine: S2473 and S2535. The segment at 2475–2843 (TRSQAQTPVL…HSGSYLVTSV (369 aa)) is interaction with DLG1. Residues 2518–2535 (NDGRPAKRHDIARSHSES) are compositionally biased toward basic and acidic residues. The segment covering 2555–2568 (SSSLPRVSTWRRTG) has biased composition (polar residues). The residue at position 2569 (S2569) is a Phosphoserine. Over residues 2569-2579 (SSSSILSASSE) the composition is skewed to low complexity. The segment covering 2580–2592 (SSEKAKSEDEKHV) has biased composition (basic and acidic residues). Composition is skewed to polar residues over residues 2593–2608 (NSISGTKQSKENQVSA), 2620–2635 (FSPTNSTSQTVSSGAT), and 2668–2679 (NPRSGRSPTGNT). Residues S2671 and S2674 each carry the phosphoserine modification. The interval 2674-2843 (SPTGNTPPVI…HSGSYLVTSV (170 aa)) is interaction with MAPRE1. At T2679 the chain carries Phosphothreonine. S2710 and S2724 each carry phosphoserine. The interval 2729-2843 (DAPDQKGTEI…HSGSYLVTSV (115 aa)) is disordered. The segment covering 2741-2757 (GQNNPVPVSETNESSIV) has biased composition (polar residues). The segment covering 2763–2774 (SSSSSSKHSSPS) has biased composition (low complexity). Residues 2784-2812 (FNYNPSPRKSSADSTSARPSQIPTPVNNN) show a composition bias toward polar residues. Position 2789 is a phosphoserine (S2789). The short motif at 2803-2806 (SQIP) is the Microtubule tip localization signal element. The PDZ-binding motif lies at 2841-2843 (TSV).

Belongs to the adenomatous polyposis coli (APC) family. As to quaternary structure, forms homooligomers. Found in a complex consisting of ARHGEF4, APC and CTNNB1. Found in a complex composed of MACF1, APC, AXIN1, CTNNB1 and GSK3B. The complex composed, at least, of APC, CTNNB1 and GSK3B interacts with JPT1; the interaction requires the inactive form of GSK3B (phosphorylated at 'Ser-9'). Interacts with APC2. Interacts with DLG1 (via PDZ domains) and DLG3 (via PDZ domains). Interacts with alpha- and beta-catenins. Interacts with AXIN1 (via RGS domain). Interacts with ARHGEF4 (via N-terminus). Interacts (via C-terminal residues 2674-2843) with MAPRE1 (via C-terminal residues 206-211); the interaction inhibits association with and bundling of F-actin. Interacts with MAPRE2 and MAPRE3 (via C-terminus). Interacts with DIAPH1; DIAPH1 acts as a scaffold protein for MAPRE1 and APC to stabilize microtubules and promote cell migration. Interacts with DIAPH2. Interacts with SCRIB; may mediate APC targeting to adherens junctions of epithelial cells. Interacts with SPATA13 (via N-terminus and SH3 domain). Interacts with ASAP1 (via SH3 domain). Interacts (at the cell membrane) with AMER1 and AMER2 (via ARM repeats). Interacts with KHDRBS1. Interacts with actin; binds both to F-actin and actin filament bundles. Phosphorylated; phosphorylation enhances the F-actin bundling activity. Phosphorylated by GSK3B. Post-translationally, ubiquitinated, leading to its degradation by the proteasome. Ubiquitination is facilitated by Axin. Deubiquitinated by ZRANB1/TRABID. In terms of tissue distribution, expressed in a variety of tissues: brain, small intestine, colon, thymus, skeletal muscle, heart, prostate, lung, spleen, ovary, testis kidney, placenta, blood and liver. Isoform 1A: Very strongly expressed in brain but has relatively low expression levels in other tissues. Isoform 1B: Predominant form in all tissues except for brain, including gastric mucosa and blood.

It localises to the cell junction. The protein localises to the adherens junction. The protein resides in the cytoplasm. It is found in the cytoskeleton. Its subcellular location is the cell projection. It localises to the lamellipodium. The protein localises to the ruffle membrane. The protein resides in the cell membrane. Functionally, tumor suppressor. Promotes rapid degradation of CTNNB1 and participates in Wnt signaling as a negative regulator. APC activity is correlated with its phosphorylation state. Activates the GEF activity of SPATA13 and ARHGEF4. Plays a role in hepatocyte growth factor (HGF)-induced cell migration. Required for MMP9 up-regulation via the JNK signaling pathway in colorectal tumor cells. Associates with both microtubules and actin filaments, components of the cytoskeleton. Plays a role in mediating the organization of F-actin into ordered bundles. Functions downstream of Rho GTPases and DIAPH1 to selectively stabilize microtubules. Acts as a mediator of ERBB2-dependent stabilization of microtubules at the cell cortex. It is required for the localization of MACF1 to the cell membrane and this localization of MACF1 is critical for its function in microtubule stabilization. The polypeptide is Adenomatous polyposis coli protein (Homo sapiens (Human)).